An 88-amino-acid polypeptide reads, in one-letter code: MAHKKGASSSRNGRDSAAHRLGVKRFGGQVVKAGEILVRQRGTKFHPGVNVGRGGDDTLFAKAAGAVEFGIKRGRKTINIVEPATQDA.

Residues methionine 1–leucine 21 are disordered.

The protein belongs to the bacterial ribosomal protein bL27 family.

The sequence is that of Large ribosomal subunit protein bL27 from Mycobacterium ulcerans (strain Agy99).